We begin with the raw amino-acid sequence, 389 residues long: Ribonucleoside-diphosphate reductase subunit M2 (389 aa).

A Phosphoserine modification is found at Ser-20. Position 33 is a phosphothreonine (Thr-33). A Cy motif is present at residues 49–51 (RRI). Fe cation contacts are provided by Asp-138, Glu-169, and His-172. Tyr-176 is an active-site residue. Positions 232, 266, and 269 each coordinate Fe cation.

This sequence belongs to the ribonucleoside diphosphate reductase small chain family. Heterodimer of a large and a small subunit. Interacts (via Cy motif and when phosphorylated at Thr-33) with CCNF; the interaction occurs exclusively in G2 and early M. It depends on Fe cation as a cofactor. Phosphorylation on Ser-20 relieves the inhibitory effect on Wnt signaling. Phosphorylated on Thr-33 by CDK1 and CDK2; predominantly in G2 and M phase. Post-translationally, ubiquitinated by the SCF(CCNF) E3 ubiquitin-protein ligase complex; leading to its degradation by the proteasome.

The protein localises to the cytoplasm. Its subcellular location is the nucleus. It catalyses the reaction a 2'-deoxyribonucleoside 5'-diphosphate + [thioredoxin]-disulfide + H2O = a ribonucleoside 5'-diphosphate + [thioredoxin]-dithiol. Functionally, provides the precursors necessary for DNA synthesis. Catalyzes the biosynthesis of deoxyribonucleotides from the corresponding ribonucleotides. Inhibits Wnt signaling. The protein is Ribonucleoside-diphosphate reductase subunit M2 (RRM2) of Homo sapiens (Human).